A 181-amino-acid chain; its full sequence is Protein Syd (181 aa).

This sequence belongs to the Syd family.

It localises to the cell inner membrane. Interacts with the SecY protein in vivo. May bind preferentially to an uncomplexed state of SecY, thus functioning either as a chelating agent for excess SecY in the cell or as a regulatory factor that negatively controls the translocase function. In Cronobacter sakazakii (strain ATCC BAA-894) (Enterobacter sakazakii), this protein is Protein Syd.